Consider the following 908-residue polypeptide: Autophagy-related protein 9 (908 aa).

The Cytoplasmic segment spans residues 1–216 (MADGVIARLM…SGMWCIVVER (216 aa)). Positions 64–162 (SRATVDGRIP…IDQELQPPLH (99 aa)) are disordered. Residues 217-237 (VLHLIKVAFVAFLLTFLSQCV) traverse the membrane as a helical segment. Residues 238 to 259 (DFKKIPSNQKLSQVLVPQCTRN) lie on the Lumenal side of the membrane. N-linked (GlcNAc...) asparagine glycosylation is present at Asn-259. The chain crosses the membrane as a helical span at residues 260–280 (MSGLWNIGLWLFAFYFMWKSI). Residues 281–433 (QYILDLRRLT…GILSAKLRSR (153 aa)) are Cytoplasmic-facing. The stretch at 434-454 (FIFAGVMILILSPFVAGYLII) is an intramembrane region. Residues 455 to 525 (VYFLEYYNEI…KTSMVAKTVS (71 aa)) are Cytoplasmic-facing. The chain crosses the membrane as a helical span at residues 526–546 (FIAGSIATVLALISVFDPEMF). The Lumenal portion of the chain corresponds to 547–555 (LGFEITHDR). A helical transmembrane segment spans residues 556–576 (TVLFYTAVFGAIWSVARGSVS). At 577–622 (EDNAVFDPEYALGNVVEYTHYQPEHWKDRWHSADVKAEFEELYKLK) the chain is on the cytoplasmic side. An intramembrane segment occupies 623 to 643 (LVIFIEEILSILTTPFVLFFS). Residues 644–908 (LPKSADQIID…HLNRRLGGVR (265 aa)) are Cytoplasmic-facing. Disordered regions lie at residues 751 to 779 (AASRMGRSQRGRSKGPLPSRTPRPGAVMA) and 809 to 878 (QFRG…DSVV). Residues 813 to 825 (GNQGDGHMMGGGS) show a composition bias toward gly residues. The span at 839-852 (QTHDDESEDSRAGL) shows a compositional bias: basic and acidic residues.

It belongs to the ATG9 family. In terms of assembly, homotrimer; forms a homotrimer with a central pore that forms a path between the two membrane leaflets. Post-translationally, phosphorylated by apg-1. Apg-1 phosphorylation is required for preautophagosome elongation.

It is found in the preautophagosomal structure membrane. The protein localises to the cytoplasmic vesicle membrane. The protein resides in the golgi apparatus membrane. It localises to the endoplasmic reticulum membrane. It catalyses the reaction a 1,2-diacyl-sn-glycero-3-phosphocholine(in) = a 1,2-diacyl-sn-glycero-3-phosphocholine(out). It carries out the reaction a 1,2-diacyl-sn-glycero-3-phospho-L-serine(in) = a 1,2-diacyl-sn-glycero-3-phospho-L-serine(out). The catalysed reaction is a 1,2-diacyl-sn-glycero-3-phosphoethanolamine(in) = a 1,2-diacyl-sn-glycero-3-phosphoethanolamine(out). The enzyme catalyses a 1,2-diacyl-sn-glycero-3-phospho-(1D-myo-inositol-3-phosphate)(in) = a 1,2-diacyl-sn-glycero-3-phospho-(1D-myo-inositol-3-phosphate)(out). Its function is as follows. Phospholipid scramblase involved in autophagy and cytoplasm to vacuole transport (Cvt) vesicle formation. Cycles between the preautophagosomal structure/phagophore assembly site (PAS) and the cytoplasmic vesicle pool and supplies membrane for the growing autophagosome. Lipid scramblase activity plays a key role in preautophagosomal structure/phagophore assembly by distributing the phospholipids that arrive through atg-2 from the cytoplasmic to the luminal leaflet of the bilayer, thereby driving autophagosomal membrane expansion. Required for mitophagy. Also involved in endoplasmic reticulum-specific autophagic process and is essential for the survival of cells subjected to severe ER stress. Different machineries are required for anterograde trafficking to the PAS during either the Cvt pathway or bulk autophagy and for retrograde trafficking. The protein is Autophagy-related protein 9 (apg-7) of Neurospora crassa (strain ATCC 24698 / 74-OR23-1A / CBS 708.71 / DSM 1257 / FGSC 987).